The primary structure comprises 473 residues: Reticulon-4 receptor (473 aa).

The first 26 residues, 1 to 26 (MKRASSGGSRLLAWVLWLQAWRVATP), serve as a signal peptide directing secretion. 2 cysteine pairs are disulfide-bonded: C27–C33 and C31–C43. The LRRNT domain occupies 27-57 (CPGACVCYNEPKVTTSCPQQGLQAVPTGIPA). LRR repeat units follow at residues 58–79 (SSQR…SFQS), 82–103 (NLTI…AFTG), 106–128 (LLEQ…TFHG), 131–152 (HLHT…LFRG), 155–176 (ALQY…TFRD), 179–200 (NLTH…AFRG), 203–224 (SLDR…AFRD), and 227–248 (RLMT…VLMP). Residue N82 is glycosylated (N-linked (GlcNAc...) asparagine). The N-linked (GlcNAc...) asparagine glycan is linked to N179. The 52-residue stretch at 260–311 (NPWVCDCRARPLWAWLQKFRGSSSEVPCNLPQRLADRDLKRLAASDLEGCAV) folds into the LRRCT domain. Cystine bridges form between C264/C287, C266/C335, and C309/C336. Residues 346 to 446 (VLEPGRPASA…GASGTGDAEG (101 aa)) are disordered. N-linked (GlcNAc...) asparagine glycosylation occurs at N372. Basic residues predominate over residues 413–429 (PRRRPGCSRKNRTRSHC). The span at 434 to 445 (AGSGASGTGDAE) shows a compositional bias: gly residues. The GPI-anchor amidated serine moiety is linked to residue S447. A propeptide spans 448-473 (GALPALACSLAPLGLALVLWTVLGPC) (removed in mature form).

It belongs to the Nogo receptor family. In terms of assembly, homodimer. Interacts with MAG. Interacts with RTN4. Interacts with NGFR. Interacts with LINGO1. Interacts with KIAA0319L. Interacts with OLFM1; this inhibits interaction with LINGO1 and NGFR. Interacts with OMG. Post-translationally, N-glycosylated. O-glycosylated. Contains terminal sialic acid groups on its glycan chains. As to expression, detected in embryonic hippocampus neurons. Detected in brain (at protein level). Detected in neurons in the neocortex, in hippocampus, dorsal thalamus, cerebellum granule cell layer and the mitral cell layer in the olfactory bulb. Detected in brain, dorsal root ganglion and heart.

The protein resides in the cell membrane. It is found in the membrane raft. The protein localises to the cell projection. Its subcellular location is the dendrite. It localises to the axon. The protein resides in the perikaryon. Functionally, receptor for RTN4, OMG and MAG. Functions as a receptor for the sialylated gangliosides GT1b and GM1. Besides, functions as a receptor for chondroitin sulfate proteoglycans. Can also bind heparin. Intracellular signaling cascades are triggered via the coreceptor NGFR. Signaling mediates activation of Rho and downstream reorganization of the actin cytoskeleton. Mediates axonal growth inhibition. Mediates axonal growth inhibition and plays a role in regulating axon regeneration and neuronal plasticity in the adult central nervous system. Plays a role in postnatal brain development. Required for normal axon migration across the brain midline and normal formation of the corpus callosum. Protects motoneurons against apoptosis; protection against apoptosis is probably mediated via interaction with MAG. Acts in conjunction with RTN4 and LINGO1 in regulating neuronal precursor cell motility during cortical development. Like other family members, plays a role in restricting the number dendritic spines and the number of synapses that are formed during brain development. This chain is Reticulon-4 receptor (Rtn4r), found in Mus musculus (Mouse).